The primary structure comprises 326 residues: Vitamin B12 import system permease protein BtuC (326 aa).

9 consecutive transmembrane segments (helical) span residues 17–39 (LSLS…QWIA), 59–81 (RTLA…QALF), 88–107 (PGLL…AVLL), 111–133 (QLAG…LILL), 146–168 (LLAG…YFST), 188–205 (WQQS…IWIC), 242–264 (MVGV…PHIL), 274–296 (VLLP…VARL), and 303–322 (LPIG…WLLL).

This sequence belongs to the binding-protein-dependent transport system permease family. FecCD subfamily. As to quaternary structure, the complex is composed of two ATP-binding proteins (BtuD), two transmembrane proteins (BtuC) and a solute-binding protein (BtuF).

It is found in the cell inner membrane. Part of the ABC transporter complex BtuCDF involved in vitamin B12 import. Involved in the translocation of the substrate across the membrane. This chain is Vitamin B12 import system permease protein BtuC, found in Salmonella paratyphi A (strain ATCC 9150 / SARB42).